A 447-amino-acid chain; its full sequence is MTKQIIALVGRPNVGKSTLFNRLSIRKKAIVHNLPGVTRDRKYTDGKIGSCEFLLIDTPGLEENPNSMSVRLMEQTTKAILEADLICFMVDCRSGILPDDKLLSSFIRKYNKPAILVVNKCEKAFDFDKEYYQLGFDSMVAISAEHGTGLIDLYDEIIAKLPKEKSIETNIADPVKGDCVQIVISGRPNAGKSTFINALINDERLLTGPEAGITRESIEIDWQYKNNHIKLIDTAGLRKKSTITESLDKLSASDAINSIKFANTVILIIDALSPLKQQDLNIASYVANEGRSIVIVVNKWDLVKESEKEAFQEEFYYQINTHLPQIKGVSVLFISAINKQNIEQVLDACLTIYKNWNKKITTSKLNEWLNFTTEAHPLPLQKGGKRVRIKYMTQIKTRPPTFKLFSNNPEKITNSYTRYLVNNMREAFDMPGIPIRFAYVKTKNPYV.

2 EngA-type G domains span residues 4-165 and 180-357; these read QIIA…PKEK and VQIV…KNWN. GTP-binding positions include 10 to 17, 57 to 61, 119 to 122, 186 to 193, 233 to 237, and 298 to 301; these read GRPNVGKS, DTPGL, NKCE, GRPNAGKS, DTAGL, and NKWD. Positions 358–443 constitute a KH-like domain; that stretch reads KKITTSKLNE…PIRFAYVKTK (86 aa).

This sequence belongs to the TRAFAC class TrmE-Era-EngA-EngB-Septin-like GTPase superfamily. EngA (Der) GTPase family. As to quaternary structure, associates with the 50S ribosomal subunit.

Its function is as follows. GTPase that plays an essential role in the late steps of ribosome biogenesis. This Rickettsia canadensis (strain McKiel) protein is GTPase Der.